A 266-amino-acid polypeptide reads, in one-letter code: F-actin-capping protein subunit beta (266 aa).

Belongs to the F-actin-capping protein beta subunit family. As to quaternary structure, component of the F-actin capping complex, composed of a heterodimer of an alpha and a beta subunit.

The protein localises to the cytoplasm. It is found in the cytoskeleton. The protein resides in the actin patch. Functionally, F-actin-capping proteins bind in a Ca(2+)-independent manner to the fast growing ends of actin filaments (barbed end) thereby blocking the exchange of subunits at these ends. Unlike other capping proteins (such as gelsolin and severin), these proteins do not sever actin filaments. The sequence is that of F-actin-capping protein subunit beta (cap2) from Emericella nidulans (strain FGSC A4 / ATCC 38163 / CBS 112.46 / NRRL 194 / M139) (Aspergillus nidulans).